The following is a 103-amino-acid chain: Small ribosomal subunit protein uS10 (103 aa).

The protein belongs to the universal ribosomal protein uS10 family. As to quaternary structure, part of the 30S ribosomal subunit.

Its function is as follows. Involved in the binding of tRNA to the ribosomes. In Chlorobium phaeobacteroides (strain DSM 266 / SMG 266 / 2430), this protein is Small ribosomal subunit protein uS10.